Here is a 37-residue protein sequence, read N- to C-terminus: Cytochrome b6-f complex subunit 5 (37 aa).

Residues 5–25 (LLCGIVLGLIPITLAGLFVAA) form a helical membrane-spanning segment.

It belongs to the PetG family. As to quaternary structure, the 4 large subunits of the cytochrome b6-f complex are cytochrome b6, subunit IV (17 kDa polypeptide, PetD), cytochrome f and the Rieske protein, while the 4 small subunits are PetG, PetL, PetM and PetN. The complex functions as a dimer.

It localises to the cellular thylakoid membrane. In terms of biological role, component of the cytochrome b6-f complex, which mediates electron transfer between photosystem II (PSII) and photosystem I (PSI), cyclic electron flow around PSI, and state transitions. PetG is required for either the stability or assembly of the cytochrome b6-f complex. The chain is Cytochrome b6-f complex subunit 5 from Cyanothece sp. (strain PCC 7425 / ATCC 29141).